The sequence spans 188 residues: GTP cyclohydrolase 1 (188 aa).

Zn(2+) is bound by residues cysteine 75, histidine 78, and cysteine 146.

This sequence belongs to the GTP cyclohydrolase I family. In terms of assembly, toroid-shaped homodecamer, composed of two pentamers of five dimers.

It carries out the reaction GTP + H2O = 7,8-dihydroneopterin 3'-triphosphate + formate + H(+). Its pathway is cofactor biosynthesis; 7,8-dihydroneopterin triphosphate biosynthesis; 7,8-dihydroneopterin triphosphate from GTP: step 1/1. This chain is GTP cyclohydrolase 1, found in Hahella chejuensis (strain KCTC 2396).